The primary structure comprises 194 residues: Leucyl/phenylalanyl-tRNA--protein transferase (194 aa).

This sequence belongs to the L/F-transferase family.

The protein localises to the cytoplasm. The enzyme catalyses N-terminal L-lysyl-[protein] + L-leucyl-tRNA(Leu) = N-terminal L-leucyl-L-lysyl-[protein] + tRNA(Leu) + H(+). It catalyses the reaction N-terminal L-arginyl-[protein] + L-leucyl-tRNA(Leu) = N-terminal L-leucyl-L-arginyl-[protein] + tRNA(Leu) + H(+). The catalysed reaction is L-phenylalanyl-tRNA(Phe) + an N-terminal L-alpha-aminoacyl-[protein] = an N-terminal L-phenylalanyl-L-alpha-aminoacyl-[protein] + tRNA(Phe). Functionally, functions in the N-end rule pathway of protein degradation where it conjugates Leu, Phe and, less efficiently, Met from aminoacyl-tRNAs to the N-termini of proteins containing an N-terminal arginine or lysine. In Chlorobium phaeobacteroides (strain DSM 266 / SMG 266 / 2430), this protein is Leucyl/phenylalanyl-tRNA--protein transferase.